A 1902-amino-acid polypeptide reads, in one-letter code: Plexin-B3 (1902 aa).

An N-terminal signal peptide occupies residues 1–36 (MLTDFLQAPVMAPWSPFSLHLLLLFLPLLPLTRVHR). Positions 37–461 (FSVPNTSFNH…TAQQVDRILV (425 aa)) constitute a Sema domain. Residues 37 to 1245 (FSVPNTSFNH…MMSTFPVEAQ (1209 aa)) are Extracellular-facing. The N-linked (GlcNAc...) asparagine glycan is linked to asparagine 41. 2 disulfide bridges follow: cysteine 88-cysteine 97 and cysteine 122-cysteine 130. N-linked (GlcNAc...) asparagine glycosylation is present at asparagine 221. 3 disulfide bridges follow: cysteine 257–cysteine 360, cysteine 273–cysteine 305, and cysteine 323–cysteine 347. Residues 353-372 (DSPESYPCGDEHTPSPIAGR) are disordered. N-linked (GlcNAc...) asparagine glycosylation is found at asparagine 416 and asparagine 469. Residues 463–515 (ACPQFPNCTTCLQARDPLCGWCILQGRCTRRGECGRAAQPNHWLWSYEDNHCP) enclose the PSI 1 domain. 5 cysteine pairs are disulfide-bonded: cysteine 464/cysteine 481, cysteine 470/cysteine 514, cysteine 473/cysteine 490, cysteine 484/cysteine 496, and cysteine 551/cysteine 569. PSI domains lie at 609–671 (DCSA…EACP) and 776–822 (DCAM…QLCP). N-linked (GlcNAc...) asparagine glycans are attached at residues asparagine 791, asparagine 889, asparagine 910, asparagine 946, asparagine 1090, and asparagine 1207. 4 IPT/TIG domains span residues 823–914 (IPSI…FTYQ), 915–1001 (DPVL…FRYT), 1003–1134 (NPQL…FLYQ), and 1154–1221 (KPGH…QMGN). The chain crosses the membrane as a helical span at residues 1246-1266 (LGLGMGAAVLIAAVLLLTLMY). Topologically, residues 1267 to 1902 (RHKSKKALRD…ALVEYKVTDL (636 aa)) are cytoplasmic.

This sequence belongs to the plexin family. In terms of assembly, binds MET and MST1R. Interacts with RIT2/RIN. May form homodimers (via Sema domain). Interacts (via cytoplasmic domain) with FSCN1, ARHGDIA and RAC1. In terms of tissue distribution, expressed in brain (at protein level). In cerebellum, strongest expression detected in Purkinje and granular cells. Detected at very low levels in several fetal tissues, including dorsal root ganglia (DRG), heart, lung, optic bulb, brain and liver.

Its subcellular location is the cell membrane. Its function is as follows. Receptor for SEMA5A that plays a role in axon guidance, invasive growth and cell migration. Stimulates neurite outgrowth and mediates Ca(2+)/Mg(2+)-dependent cell aggregation. In glioma cells, SEMA5A stimulation of PLXNB3 results in the disassembly of F-actin stress fibers, disruption of focal adhesions and cellular collapse as well as inhibition of cell migration and invasion through ARHGDIA-mediated inactivation of RAC1. Seem to be non-essential for normal development and function of the central nervous system. This is Plexin-B3 (Plxnb3) from Mus musculus (Mouse).